The following is a 153-amino-acid chain: MRCPFCAHDDSQVKDSRPAEDNAAIRRRRQCSKCGARFTTFERVQLRDVTVVKSDDKREAFDRSKLEQSVTLACRKRGVTQEQIDQLVSGIQRQVETAGEGEIASTRIGEMVMDGLRQIDSVAYIRFASVYRDFSEARDFEEFASTVQEAAKD.

Residues 3–34 fold into a zinc finger; the sequence is CPFCAHDDSQVKDSRPAEDNAAIRRRRQCSKC. The ATP-cone domain maps to 49–139; sequence VTVVKSDDKR…VYRDFSEARD (91 aa).

The protein belongs to the NrdR family. Zn(2+) is required as a cofactor.

Its function is as follows. Negatively regulates transcription of bacterial ribonucleotide reductase nrd genes and operons by binding to NrdR-boxes. This Erythrobacter litoralis (strain HTCC2594) protein is Transcriptional repressor NrdR.